Consider the following 911-residue polypeptide: Protein translocase subunit SecA (911 aa).

ATP is bound by residues Q87, 105–109, and D512; that span reads GEGKT. A compositionally biased stretch (basic and acidic residues) spans 561 to 571; it reads RHESRRIDNQL. The interval 561 to 583 is disordered; it reads RHESRRIDNQLRGRSGRQGDPGS. Residues C895, C897, C906, and H907 each contribute to the Zn(2+) site.

It belongs to the SecA family. In terms of assembly, monomer and homodimer. Part of the essential Sec protein translocation apparatus which comprises SecA, SecYEG and auxiliary proteins SecDF-YajC and YidC. Zn(2+) is required as a cofactor.

It is found in the cell inner membrane. Its subcellular location is the cytoplasm. It catalyses the reaction ATP + H2O + cellular proteinSide 1 = ADP + phosphate + cellular proteinSide 2.. Part of the Sec protein translocase complex. Interacts with the SecYEG preprotein conducting channel. Has a central role in coupling the hydrolysis of ATP to the transfer of proteins into and across the cell membrane, serving both as a receptor for the preprotein-SecB complex and as an ATP-driven molecular motor driving the stepwise translocation of polypeptide chains across the membrane. The chain is Protein translocase subunit SecA from Pseudomonas putida (strain W619).